A 72-amino-acid polypeptide reads, in one-letter code: Hypotensin-1 (72 aa).

A signal peptide spans 1–24; the sequence is MKMMIPVIFSILLLIFSLSSTAMS. The propeptide occupies 25-35; it reads LEDEQENMEER. A Phosphoserine modification is found at S41. Residues 53–72 are disordered; the sequence is ETNAKPPARFDPAAFEKSDD. Positions 61 to 72 are excised as a propeptide; that stretch reads RFDPAAFEKSDD.

It belongs to the non-disulfide-bridged peptide (NDBP) superfamily. In terms of processing, undergoes enzymatic cleavages by carboxypeptidases, endopeptidases, and aminopeptidases resulting in at least 46 fragments of this protein. As to expression, expressed by the venom gland.

The protein resides in the secreted. Agonist of the B2 bradykinin receptor (BDKRB2). Potentiates the hypotensive effect of bradykinin (BK) and induces a direct vasorelaxing effect independent of BK, by endothelium- and nitric oxide (NO)-dependent mechanisms in rat aortic ring preparations. Also exerts proangiogenic, antiinflammatory, and antifibrogenic activities. Does not inhibit the angiotensin-converting enzyme (ACE) but increases its activity, and inhibits neprilysin (NEP) in a non-competitive manner. Exerts intermediate cytotoxicity and pro-inflammatory effects on mouse macrophages, and increases the phagocytic activity of these murine cells. Functionally, presents moderate hemolytic activity at physiological concentrations (micromolar range). Does not induce mast cell degranulation, lactate dehydrogenase (LDH) release from mast cells and antimicrobial effects. In vivo, causes intense pain (but no edema formation), when injected in mice hind paws. Also induces discomfort and anxiety in mice, as it moderately diminishes locomotion and moderately increases rearing behavior. The chain is Hypotensin-1 from Tityus serrulatus (Brazilian scorpion).